The sequence spans 566 residues: Putative ABC transporter ATP-binding protein BCE_2668 (566 aa).

2 ABC transporter domains span residues 5–246 (ISFE…GLRE) and 300–533 (LKVE…ANLK). ATP is bound by residues 39–46 (GRSGSGKS) and 333–340 (GHNGAGKS).

It belongs to the ABC transporter superfamily.

It localises to the cell membrane. In terms of biological role, probably part of an ABC transporter complex. Responsible for energy coupling to the transport system. This is Putative ABC transporter ATP-binding protein BCE_2668 from Bacillus cereus (strain ATCC 10987 / NRS 248).